The following is a 652-amino-acid chain: Protein high chlorophyll fluorescent 107 (652 aa).

Disordered stretches follow at residues 1–21 (MHFF…NTSS) and 78–121 (VFSP…EGKK). The N-terminal 68 residues, 1–68 (MHFFFVPNSS…TFSSKNTYLY (68 aa)), are a transit peptide targeting the chloroplast. A compositionally biased stretch (basic and acidic residues) spans 105-121 (PLLENSDKESSEEEGKK). 12 TPR repeats span residues 168–201 (LDLS…WPED), 202–235 (GRPY…TQGE), 237–270 (SYIW…DKKH), 271–304 (VAAW…CGRN), 305–338 (EYIY…NSRS), 339–372 (CASW…SPKN), 374–406 (FAWH…NPRD), 407–440 (PVLL…DPRH), 441–474 (QPVW…DANT), 478–511 (SRCL…NSQS), 543–576 (TEVV…GQNN), and 598–631 (QQPE…DPLK). The disordered stretch occupies residues 585 to 610 (LRNMNRTKDSQSNQQPESSAGREDIE).

May form homomultimers. Part of a multi-subunit complex in the range of 60-190 and 600-800 kDa in chloroplast membranes.

It localises to the plastid. It is found in the chloroplast. The protein resides in the chloroplast membrane. The protein localises to the chloroplast stroma. Functionally, involved, directly or indirectly, in the processing of chloroplast encoded mRNAs. Exhibits sequence-specific RNA binding and RNA remodeling activities, probably leading to the activation of translation of the target gene cluster psbB-psbT-psbH-petB-petD. Blocks 5'-3' and 3'-5' exoribonucleases (e.g. polynucleotide phosphorylase (PNPase), RNase R) in vitro. Necessary for intercistronic RNA processing of the psbH 5' untranslated region or the stabilization of 5' processed psbH RNAs. Also required for the synthesis of psbB. This chain is Protein high chlorophyll fluorescent 107, found in Arabidopsis thaliana (Mouse-ear cress).